Reading from the N-terminus, the 311-residue chain is Putative S-adenosyl-L-methionine-dependent methyltransferase MMAR_0358 (311 aa).

Residues Asp132 and 161–162 (DL) each bind S-adenosyl-L-methionine.

The protein belongs to the UPF0677 family.

Functionally, exhibits S-adenosyl-L-methionine-dependent methyltransferase activity. The chain is Putative S-adenosyl-L-methionine-dependent methyltransferase MMAR_0358 from Mycobacterium marinum (strain ATCC BAA-535 / M).